A 993-amino-acid chain; its full sequence is Testis-expressed protein 13C (993 aa).

Disordered stretches follow at residues 281 to 381 (QEET…SLKK), 520 to 547 (DSKS…SHSL), and 894 to 959 (FSKS…PVNW). Over residues 325-335 (GMTSQGDSSSH) the composition is skewed to polar residues. Positions 353–364 (SRSHSLEKKPVM) are enriched in basic and acidic residues. The span at 944-957 (ESQQQKPASCSSPV) shows a compositional bias: polar residues. The segment at 955 to 984 (SPVNWACPWCNAMNFPRNKVCSKCKRVRMP) adopts a RanBP2-type zinc-finger fold.

This sequence belongs to the TEX13 family.

The protein is Testis-expressed protein 13C of Homo sapiens (Human).